The following is a 547-amino-acid chain: Cdc42-interacting protein 4 (547 aa).

Residues 1–117 (MDWGTELWDQ…EMKQERKMHF (117 aa)) form a required for translocation to the plasma membrane in response to insulin, podosome formation and interaction with AKAP9 and microtubules region. The region spanning 1–264 (MDWGTELWDQ…AAESVDAKND (264 aa)) is the F-BAR domain. Positions 67 to 259 (FSQQQSFVQL…EGMKVAAESV (193 aa)) form a coiled coil. An interaction with CDC42 region spans residues 293–483 (RVPSDSSLGT…YTEFDEDFEE (191 aa)). The segment at 293–547 (RVPSDSSLGT…PTSYLRVTLN (255 aa)) is interaction with PDE6G. Residues 294–323 (VPSDSSLGTPDGRPELRAASSRSRAKRWPF) form a disordered region. A phosphoserine mark is found at S296, S298, and S299. Positions 332–425 (TEDFSHLPPE…ESRVLSNRGD (94 aa)) form a coiled coil. In terms of domain architecture, REM-1 spans 337 to 414 (HLPPEQQRKR…VQKYEAWLAE (78 aa)). The tract at residues 415–547 (AESRVLSNRG…PTSYLRVTLN (133 aa)) is required for interaction with FASLG and localization to lysosomes. The tract at residues 420–485 (LSNRGDSLSR…EFDEDFEEPA (66 aa)) is disordered. A Phosphoserine modification is found at S426. Positions 431–487 (TRPPDPPTTAPPDSSSSSNNSGSQDNKESSEEPPSEEGQDTPIYTEFDEDFEEPASP) are interaction with DNM2 and WASL. Low complexity predominate over residues 441–451 (PPDSSSSSNNS). Residues 476–547 (EFDEDFEEPA…PTSYLRVTLN (72 aa)) form an interaction with DNM1 and WASL region. A required for podosome formation region spans residues 484–547 (PASPIGQCVA…PTSYLRVTLN (64 aa)). The region spanning 486–547 (SPIGQCVAIY…PTSYLRVTLN (62 aa)) is the SH3 domain. The interval 490–547 (QCVAIYHFEGSSEGTVSMSEGEDLSLMEEDKGDGWTRVRRKQGGEGYVPTSYLRVTLN) is interaction with WAS. Residues 492–547 (VAIYHFEGSSEGTVSMSEGEDLSLMEEDKGDGWTRVRRKQGGEGYVPTSYLRVTLN) form an interaction with ARHGAP17, DAAM1, DIAPH1 and DIAPH2 region.

The protein belongs to the FNBP1 family. Homodimerizes, the dimers can polymerize end-to-end to form filamentous structures. Interacts specifically with GTP-bound CDC42 and RHOQ. Interacts with AKAP9, ARHGAP17, DAAM1, DIAPH1, DIAPH2, DNM1, DNM2, FASLG/FASL, GAPVD1, LYN, microtubules, SRC, WAS/WASP and WASL/N-WASP. Interacts with the ligand binding domain of the thyroid receptor (TR) in the presence of thyroid hormone. May interact with CTNNB1 and HD/HTT. Interacts with PDE6G. Expressed in adrenal gland, aorta, brain, heart, kidney, liver, skeletal muscle and spleen.

Its subcellular location is the cytoplasm. The protein localises to the cytoskeleton. It localises to the cell cortex. The protein resides in the lysosome. It is found in the golgi apparatus. Its subcellular location is the cell membrane. The protein localises to the cell projection. It localises to the phagocytic cup. Required to coordinate membrane tubulation with reorganization of the actin cytoskeleton during endocytosis. Also acts as a link between CDC42 signaling and regulation of the actin cytoskeleton. Binds to lipids such as phosphatidylinositol 4,5-bisphosphate and phosphatidylserine and promotes membrane invagination and the formation of tubules. Also enhances actin polymerization in the vicinity of membrane tubules by recruiting WASL/N-WASP which in turn activates the Arp2/3 complex. Actin polymerization and dynamin may promote the fission of membrane tubules to form endocytic vesicles. Required for the formation of podosomes, actin-rich adhesion structures specific to monocyte-derived cells. Required for translocation of GLUT4 to the plasma membrane in response to insulin signaling. May be required for the lysosomal retention of FASLG/FASL. This chain is Cdc42-interacting protein 4 (Trip10), found in Rattus norvegicus (Rat).